The primary structure comprises 271 residues: Tryptophan synthase alpha chain (271 aa).

Active-site proton acceptor residues include Glu51 and Asp62.

The protein belongs to the TrpA family. Tetramer of two alpha and two beta chains.

It carries out the reaction (1S,2R)-1-C-(indol-3-yl)glycerol 3-phosphate + L-serine = D-glyceraldehyde 3-phosphate + L-tryptophan + H2O. It participates in amino-acid biosynthesis; L-tryptophan biosynthesis; L-tryptophan from chorismate: step 5/5. Functionally, the alpha subunit is responsible for the aldol cleavage of indoleglycerol phosphate to indole and glyceraldehyde 3-phosphate. The protein is Tryptophan synthase alpha chain of Prochlorococcus marinus (strain NATL2A).